Reading from the N-terminus, the 331-residue chain is Glutamyl-Q tRNA(Asp) synthetase (331 aa).

Residues 1–30 (MVQQAVIQRSANQQLSNQRSANQRATNQPT) are compositionally biased toward polar residues. The interval 1-36 (MVQQAVIQRSANQQLSNQRSANQRATNQPTEYVGRF) is disordered. L-glutamate-binding positions include 35-39 (RFAPS) and Glu71. Residues 38 to 48 (PSPSGDLHFGS) carry the 'HIGH' region motif. Zn(2+)-binding residues include Cys127, Cys129, Tyr141, and Cys145. Tyr198 and Arg216 together coordinate L-glutamate. The 'KMSKS' region motif lies at 254 to 258 (KLSKQ). Lys257 lines the ATP pocket.

Belongs to the class-I aminoacyl-tRNA synthetase family. GluQ subfamily. It depends on Zn(2+) as a cofactor.

Catalyzes the tRNA-independent activation of glutamate in presence of ATP and the subsequent transfer of glutamate onto a tRNA(Asp). Glutamate is transferred on the 2-amino-5-(4,5-dihydroxy-2-cyclopenten-1-yl) moiety of the queuosine in the wobble position of the QUC anticodon. This is Glutamyl-Q tRNA(Asp) synthetase from Yersinia pseudotuberculosis serotype I (strain IP32953).